The chain runs to 775 residues: Polyribonucleotide nucleotidyltransferase (775 aa).

The tract at residues 223-247 (DEQVPEKPRKGRRRGRKSSPRKKTD) is disordered. Positions 231–243 (RKGRRRGRKSSPR) are enriched in basic residues. D567 and D573 together coordinate Mg(2+). One can recognise a KH domain in the interval 633 to 692 (PRITTISVPVSKIGEVIGPKGKNINQITEDTGARVSIEDDGTVFISATSGGSAEAAVDRI). The region spanning 704-773 (GERFLGTVVK…NRGKISLVPV (70 aa)) is the S1 motif domain.

This sequence belongs to the polyribonucleotide nucleotidyltransferase family. Mg(2+) serves as cofactor.

It is found in the cytoplasm. It catalyses the reaction RNA(n+1) + phosphate = RNA(n) + a ribonucleoside 5'-diphosphate. Its function is as follows. Involved in mRNA degradation. Catalyzes the phosphorolysis of single-stranded polyribonucleotides processively in the 3'- to 5'-direction. The protein is Polyribonucleotide nucleotidyltransferase of Corynebacterium kroppenstedtii (strain DSM 44385 / JCM 11950 / CIP 105744 / CCUG 35717).